Here is a 104-residue protein sequence, read N- to C-terminus: Large ribosomal subunit protein uL24 (104 aa).

This sequence belongs to the universal ribosomal protein uL24 family. As to quaternary structure, part of the 50S ribosomal subunit.

In terms of biological role, one of two assembly initiator proteins, it binds directly to the 5'-end of the 23S rRNA, where it nucleates assembly of the 50S subunit. One of the proteins that surrounds the polypeptide exit tunnel on the outside of the subunit. The chain is Large ribosomal subunit protein uL24 from Pseudomonas savastanoi pv. phaseolicola (strain 1448A / Race 6) (Pseudomonas syringae pv. phaseolicola (strain 1448A / Race 6)).